The sequence spans 172 residues: MKEEKKLLLREVEEKITASQGFILLRYLGFTAAHSRSFRNNLSGVSAEFEVLKKKIFFKALETSGVEMDPEGGEGHLGVVFAYGDPVSAAKQVLDFNKQHNDSLVFLAGRIDNASLSGREVEAVAKLPSMKELRQQVVGLIAAPMSQVAGIMNSVLSGVISCVDQKAEKTQE.

Belongs to the universal ribosomal protein uL10 family. In terms of assembly, part of the ribosomal stalk of the 50S ribosomal subunit. The N-terminus interacts with L11 and the large rRNA to form the base of the stalk. The C-terminus forms an elongated spine to which L12 dimers bind in a sequential fashion forming a multimeric L10(L12)X complex.

In terms of biological role, forms part of the ribosomal stalk, playing a central role in the interaction of the ribosome with GTP-bound translation factors. This chain is Large ribosomal subunit protein uL10 (rplJ), found in Chlamydia trachomatis serovar D (strain ATCC VR-885 / DSM 19411 / UW-3/Cx).